The chain runs to 209 residues: Ribosomal RNA large subunit methyltransferase E (209 aa).

Residues Gly-63, Trp-65, Asp-83, Asp-99, and Asp-124 each coordinate S-adenosyl-L-methionine. Lys-164 functions as the Proton acceptor in the catalytic mechanism.

The protein belongs to the class I-like SAM-binding methyltransferase superfamily. RNA methyltransferase RlmE family.

The protein localises to the cytoplasm. It catalyses the reaction uridine(2552) in 23S rRNA + S-adenosyl-L-methionine = 2'-O-methyluridine(2552) in 23S rRNA + S-adenosyl-L-homocysteine + H(+). Its function is as follows. Specifically methylates the uridine in position 2552 of 23S rRNA at the 2'-O position of the ribose in the fully assembled 50S ribosomal subunit. In Shigella dysenteriae serotype 1 (strain Sd197), this protein is Ribosomal RNA large subunit methyltransferase E.